Here is a 342-residue protein sequence, read N- to C-terminus: MSKAYEQSGVNIHAGYEAVERMSSHVKRTMRKEVIGGLGGFGATFDLSQLNMTAPVLVSGTDGVGTKLKLAIDYGKHDSIGIDAVAMCVNDILTTGAEPLYFLDYIATNKVVPEVIEQIVKGISDACVETNTALIGGETAEMGEMYHEGEYDVAGFAVGAVEKDDYVDGSEVKEGQVVIGLASSGIHSNGYSLVRKLINESDIDLASNFDNRPFIDVFLEPTKLYVKPVLALKKEVSIKAMNHITGGGFYENIPRALPAGYAARIDTTSFPTPKIFDWLQQQGNIDTNEMYNIFNMGIGYTVIVDEKDVSRALKILAEQNVEAYQIGHIVKNESTAIELLGV.

This sequence belongs to the AIR synthase family.

It localises to the cytoplasm. It catalyses the reaction 2-formamido-N(1)-(5-O-phospho-beta-D-ribosyl)acetamidine + ATP = 5-amino-1-(5-phospho-beta-D-ribosyl)imidazole + ADP + phosphate + H(+). It participates in purine metabolism; IMP biosynthesis via de novo pathway; 5-amino-1-(5-phospho-D-ribosyl)imidazole from N(2)-formyl-N(1)-(5-phospho-D-ribosyl)glycinamide: step 2/2. The chain is Phosphoribosylformylglycinamidine cyclo-ligase from Staphylococcus aureus (strain bovine RF122 / ET3-1).